A 417-amino-acid chain; its full sequence is uncharacterized protein (417 aa).

Transmembrane regions (helical) follow at residues Leu-87 to Ile-107, Ile-130 to Val-150, Phe-177 to Ala-197, and Ile-202 to Asp-222. A compositionally biased stretch (low complexity) spans Ala-366–Thr-398. Positions Ala-366–Trp-417 are disordered.

The protein belongs to the YccS/YhfK family.

The protein resides in the cell membrane. This is an uncharacterized protein from Neisseria gonorrhoeae.